The chain runs to 381 residues: 5-cytosine rRNA methyltransferase NSUN4 (381 aa).

Residues 1–25 constitute a mitochondrion transit peptide; the sequence is MAAPVLRCVRKLLKLVDFTPVPRRY. The S-adenosyl-L-methionine site is built by Gly182, Gly183, Lys184, and Asp201. At Ser203 the chain carries Phosphoserine. Residues Arg206, Asp234, Gly235, and Asp252 each contribute to the S-adenosyl-L-methionine site. The active-site Nucleophile is the Cys307.

The protein belongs to the class I-like SAM-binding methyltransferase superfamily. RsmB/NOP family. In terms of assembly, heterodimer with MTERFD2/MTERF4; this interaction seems to be required for NSUN4 recruitment to the mitochondrial large ribosomal subunit.

It is found in the mitochondrion. It catalyses the reaction a cytidine in rRNA + S-adenosyl-L-methionine = a 5-methylcytidine in rRNA + S-adenosyl-L-homocysteine + H(+). The catalysed reaction is a cytidine in mRNA + S-adenosyl-L-methionine = a 5-methylcytidine in mRNA + S-adenosyl-L-homocysteine + H(+). Its function is as follows. Mitochondrial RNA cytosine C(5)-methyltransferase that methylates cytosine to 5-methylcytosine (m5C) in various RNAs, such as rRNAs, mRNAs and some long non-coding RNAs (lncRNAs). Involved in mitochondrial ribosome small subunit (SSU) maturation by catalyzing methylation of mitochondrial 12S rRNA; the function is independent of MTERFD2/MTERF4 and assembled mitochondrial ribosome large subunit (LSU). Targeted to LSU by MTERFD2/MTERF4 and probably is involved in a final step in ribosome biogenesis to ensure that SSU and LSU are assembled. In vitro can methylate 16S rRNA of the LSU; the methylation is enhanced by MTERFD/MTERF4. Also acts as a regulator of innate immunity by marking double-stranded mitochondrial RNAs(mt-dsRNAs) generated in response to stress: catalyzes m5C modification on mitochondrial RNAs, such as a mRNAs and lncRNAs, with a preference for the termini of light-strand lncRNAs, promoting their degradation and cytosolic release. Modified light-strand lncRNAs are then recognized by C1QBP reader and recruited to the mitochondrial degradosome complex, which promotes their degradation. This Mus musculus (Mouse) protein is 5-cytosine rRNA methyltransferase NSUN4.